A 223-amino-acid polypeptide reads, in one-letter code: Ras-related protein Rab-21 (223 aa).

The residue at position 2 (alanine 2) is an N-acetylalanine. 10 residues coordinate GTP: glycine 26, glycine 29, lysine 30, threonine 31, serine 32, asparagine 43, aspartate 44, histidine 46, threonine 48, and threonine 49. Position 31 (threonine 31) interacts with Mg(2+). The Switch 1 motif lies at 41–54 (KFNDKHITTLQASF). The Mg(2+) site is built by threonine 49 and aspartate 72. A Switch 2 motif is present at residues 74 to 92 (AGQERFHALGPIYYRDSNG). Positions 75, 130, 131, 133, 161, and 162 each coordinate GTP. 2 S-geranylgeranyl cysteine lipidation sites follow: cysteine 219 and cysteine 220. Cysteine 220 carries the post-translational modification Cysteine methyl ester. Positions 221 to 223 (SSG) are cleaved as a propeptide — removed in mature form.

Belongs to the small GTPase superfamily. Rab family. In terms of assembly, interacts with the cytoplasmic tail of integrins ITGA1, ITGA2, ITGA5, ITGA6, ITGA11 and ITGB1; this interaction is dependent upon its GDP/GTP cycle. Interacts with RABGEF1 (via VPS9 domain). Interacts with ANKRD27. Interacts (in GTP-bound form) with VAMP8 in response to starvation; the interaction probably regulates VAMP8 endolysosomal trafficking. Interacts (active GTP-bound form) with TMED10; the interaction is indirect and regulates TMED10 abundance and localization at the Golgi. Mg(2+) is required as a cofactor.

The protein localises to the endoplasmic reticulum membrane. It localises to the golgi apparatus. The protein resides in the trans-Golgi network. Its subcellular location is the golgi apparatus membrane. It is found in the early endosome membrane. The protein localises to the cytoplasmic vesicle membrane. It localises to the cleavage furrow. The protein resides in the cell projection. Its subcellular location is the neuron projection. The enzyme catalyses GTP + H2O = GDP + phosphate + H(+). With respect to regulation, regulated by guanine nucleotide exchange factors (GEFs) including ANKRD27 and RABGEF1, which promote the exchange of bound GDP for free GTP. Regulated by GTPase activating proteins (GAPs) which increase the GTP hydrolysis activity. Inhibited by GDP dissociation inhibitors (GDIs). Functionally, the small GTPases Rab are key regulators of intracellular membrane trafficking, from the formation of transport vesicles to their fusion with membranes. Rabs cycle between an inactive GDP-bound form and an active GTP-bound form that is able to recruit to membranes different sets of downstream effectors directly responsible for vesicle formation, movement, tethering and fusion. RAB21 is involved in membrane trafficking control. Regulates integrin internalization and recycling, but does not influence the traffic of endosomally translocated receptors in general. As a result, may regulate cell adhesion and migration. During the mitosis of adherent cells, controls the endosomal trafficking of integrins which is required for the successful completion of cytokinesis. Involved in neurite growth. Following SBF2/MTMT13-mediated activation in response to starvation-induced autophagy, binds to and regulates SNARE protein VAMP8 endolysosomal transport required for SNARE-mediated autophagosome-lysosome fusion. Modulates protein levels of the cargo receptors TMED2 and TMED10, and required for appropriate Golgi localization of TMED10. The sequence is that of Ras-related protein Rab-21 from Rattus norvegicus (Rat).